The sequence spans 303 residues: Dihydroorotate dehydrogenase B (NAD(+)), catalytic subunit (303 aa).

Residues S23 and 47–48 (KS) contribute to the FMN site. Substrate is bound by residues K47, 71–75 (NAMGL), and N125. N125 contributes to the FMN binding site. C128 (nucleophile) is an active-site residue. Positions 163 and 189 each coordinate FMN. Substrate is bound at residue 190–191 (NT). FMN-binding positions include G215, 241 to 242 (GG), and 263 to 264 (GT).

Belongs to the dihydroorotate dehydrogenase family. Type 1 subfamily. Heterotetramer of 2 PyrK and 2 PyrD type B subunits. It depends on FMN as a cofactor.

It is found in the cytoplasm. It catalyses the reaction (S)-dihydroorotate + NAD(+) = orotate + NADH + H(+). The protein operates within pyrimidine metabolism; UMP biosynthesis via de novo pathway; orotate from (S)-dihydroorotate (NAD(+) route): step 1/1. In terms of biological role, catalyzes the conversion of dihydroorotate to orotate with NAD(+) as electron acceptor. This chain is Dihydroorotate dehydrogenase B (NAD(+)), catalytic subunit (pyrD), found in Pyrococcus horikoshii (strain ATCC 700860 / DSM 12428 / JCM 9974 / NBRC 100139 / OT-3).